A 223-amino-acid polypeptide reads, in one-letter code: Urease accessory protein UreF (223 aa).

It belongs to the UreF family. In terms of assembly, ureD, UreF and UreG form a complex that acts as a GTP-hydrolysis-dependent molecular chaperone, activating the urease apoprotein by helping to assemble the nickel containing metallocenter of UreC. The UreE protein probably delivers the nickel.

Its subcellular location is the cytoplasm. In terms of biological role, required for maturation of urease via the functional incorporation of the urease nickel metallocenter. This Rhizobium johnstonii (strain DSM 114642 / LMG 32736 / 3841) (Rhizobium leguminosarum bv. viciae) protein is Urease accessory protein UreF.